A 307-amino-acid chain; its full sequence is Ribosomal RNA small subunit methyltransferase H (307 aa).

S-adenosyl-L-methionine-binding positions include 32 to 34 (GGH), aspartate 52, phenylalanine 78, aspartate 100, and glutamine 107.

This sequence belongs to the methyltransferase superfamily. RsmH family.

It is found in the cytoplasm. It catalyses the reaction cytidine(1402) in 16S rRNA + S-adenosyl-L-methionine = N(4)-methylcytidine(1402) in 16S rRNA + S-adenosyl-L-homocysteine + H(+). Its function is as follows. Specifically methylates the N4 position of cytidine in position 1402 (C1402) of 16S rRNA. In Coxiella burnetii (strain CbuG_Q212) (Coxiella burnetii (strain Q212)), this protein is Ribosomal RNA small subunit methyltransferase H.